The following is a 160-amino-acid chain: 6,7-dimethyl-8-ribityllumazine synthase (160 aa).

Residues W28, 59-61, and 81-83 contribute to the 5-amino-6-(D-ribitylamino)uracil site; these read ALE and CVI. 86–87 serves as a coordination point for (2S)-2-hydroxy-3-oxobutyl phosphate; the sequence is ET. H89 acts as the Proton donor in catalysis. Position 114 (N114) interacts with 5-amino-6-(D-ribitylamino)uracil. Position 128 (R128) interacts with (2S)-2-hydroxy-3-oxobutyl phosphate.

This sequence belongs to the DMRL synthase family.

The catalysed reaction is (2S)-2-hydroxy-3-oxobutyl phosphate + 5-amino-6-(D-ribitylamino)uracil = 6,7-dimethyl-8-(1-D-ribityl)lumazine + phosphate + 2 H2O + H(+). It functions in the pathway cofactor biosynthesis; riboflavin biosynthesis; riboflavin from 2-hydroxy-3-oxobutyl phosphate and 5-amino-6-(D-ribitylamino)uracil: step 1/2. Functionally, catalyzes the formation of 6,7-dimethyl-8-ribityllumazine by condensation of 5-amino-6-(D-ribitylamino)uracil with 3,4-dihydroxy-2-butanone 4-phosphate. This is the penultimate step in the biosynthesis of riboflavin. In Corynebacterium urealyticum (strain ATCC 43042 / DSM 7109), this protein is 6,7-dimethyl-8-ribityllumazine synthase.